Consider the following 492-residue polypeptide: Adenosylhomocysteinase-like 2 (492 aa).

A disordered region spans residues 43-64 (FTGSSDEEDVSPKDNHQRNSAG). D192 and E217 together coordinate substrate. 218-220 (SVT) is an NAD(+) binding site. Residues K247 and D251 each coordinate substrate. NAD(+) contacts are provided by residues 283–288 (GDVGKG), E304, 360–362 (MGH), N407, K486, 486–490 (KANYY), and Y490.

Belongs to the adenosylhomocysteinase family. Requires NAD(+) as cofactor.

Functionally, might play a role in the regulation of methionine metabolism. This Drosophila melanogaster (Fruit fly) protein is Adenosylhomocysteinase-like 2.